We begin with the raw amino-acid sequence, 43 residues long: Metallothionein B (43 aa).

The tract at residues 1 to 16 is beta; that stretch reads SCAGSCKCKNCRCRSC. A divalent metal cation contacts are provided by C2, C6, C8, C11, C13, C16, C20, C21, C23, C24, C28, C31, C35, and C37. Positions 17 to 43 are alpha; sequence RKSCCSCCPAGCNNCVKGCVCKEPASS.

The protein belongs to the metallothionein superfamily. Type 1 family.

Its function is as follows. Metallothioneins have a high content of cysteine residues that bind various heavy metals. In Colinus virginianus (Northern bobwhite), this protein is Metallothionein B.